The sequence spans 206 residues: Inner membrane-spanning protein YciB (206 aa).

Transmembrane regions (helical) follow at residues 50-70 (PILLATAIAIIATILQIGYLL), 78-98 (GTLWLSLAIIVFFGGATIYFH), 105-125 (WKPTVLYWCFAAALLFSQIFL), 150-170 (LSWVAFFITMGLLNLYVAFNF), and 173-193 (AAWVNFKLFGGMGLMFAFIII).

It belongs to the YciB family.

The protein resides in the cell inner membrane. In terms of biological role, plays a role in cell envelope biogenesis, maintenance of cell envelope integrity and membrane homeostasis. This is Inner membrane-spanning protein YciB from Herminiimonas arsenicoxydans.